The chain runs to 255 residues: Triosephosphate isomerase (255 aa).

9 to 11 serves as a coordination point for substrate; sequence NWK. Catalysis depends on H95, which acts as the Electrophile. Catalysis depends on E167, which acts as the Proton acceptor. Substrate is bound by residues G173, S212, and 233–234; that span reads GG.

This sequence belongs to the triosephosphate isomerase family. Homodimer.

It localises to the cytoplasm. The catalysed reaction is D-glyceraldehyde 3-phosphate = dihydroxyacetone phosphate. It participates in carbohydrate biosynthesis; gluconeogenesis. The protein operates within carbohydrate degradation; glycolysis; D-glyceraldehyde 3-phosphate from glycerone phosphate: step 1/1. In terms of biological role, involved in the gluconeogenesis. Catalyzes stereospecifically the conversion of dihydroxyacetone phosphate (DHAP) to D-glyceraldehyde-3-phosphate (G3P). In Photorhabdus laumondii subsp. laumondii (strain DSM 15139 / CIP 105565 / TT01) (Photorhabdus luminescens subsp. laumondii), this protein is Triosephosphate isomerase.